The primary structure comprises 142 residues: Transcriptional regulator MraZ (142 aa).

SpoVT-AbrB domains lie at 5–51 and 77–120; these read ASAL…PRPE and AMDV…DSQT.

It belongs to the MraZ family. Forms oligomers.

The protein resides in the cytoplasm. It is found in the nucleoid. This chain is Transcriptional regulator MraZ, found in Burkholderia ambifaria (strain MC40-6).